Here is a 964-residue protein sequence, read N- to C-terminus: Cycloisomaltooligosaccharide glucanotransferase (964 aa).

Residues 1 to 30 form the signal peptide; the sequence is MRVKILPLVFMTLLLIVPSQMLLPSGQANA. CBM6 domains lie at 413–538 and 740–863; these read DRYE…LTLG and NMYE…LKLD.

This sequence belongs to the glycosyl hydrolase 66 family.

It catalyses the reaction cyclizes part of a (1-&gt;6)-alpha-D-glucan chain by formation of a (1-&gt;6)-alpha-D-glucosidic bond.. Produces cycloisomaltooligosaccharide from dextran. The polypeptide is Cycloisomaltooligosaccharide glucanotransferase (cit) (Niallia circulans (Bacillus circulans)).